We begin with the raw amino-acid sequence, 796 residues long: Pathogenesis-related homeodomain protein (796 aa).

Disordered stretches follow at residues 34-57 and 80-99; these read KKGKEVSNKRNSKQNKRKAEEELC and VKKTRKRKSKRQQKDNKVEV. Residues 81–90 show a composition bias toward basic residues; that stretch reads KKTRKRKSKR. The PHD-type zinc-finger motif lies at 190–247; sequence HIFCAECNSREAFPDNDIILCDGTCNRAFHQKCLDPPLETESIPPGDQGWFCKFCDCK. Disordered regions lie at residues 282–347, 393–422, and 511–736; these read SEAT…STGS, LQEQGSEDEDWGPNDRRKRKRESDAGSTLV, and NRKT…TEEE. A compositionally biased stretch (acidic residues) spans 292–303; that stretch reads WPSDDSKDDDYD. The segment at residues 452-511 is a DNA-binding region (homeobox); sequence GGRRRMFRLPRNAVEKLRQVFAETELPSKAVRDRLAKELSLDPEKVNKWFKNTRYMALRN. Composition is skewed to polar residues over residues 538 to 547 and 560 to 569; these read ENNTETNEVQ and ATNQNILSPC. Over residues 570–580 the composition is skewed to low complexity; that stretch reads NNNQEEFQQEN. Positions 581-600 are enriched in polar residues; the sequence is VSFPSPTDESQQYLEQNDSS. 4 tandem repeats follow at residues 605 to 631, 632 to 658, 659 to 685, and 686 to 712. Positions 605–735 are 5 X 27 AA tandem repeats; it reads PHEKQSSEIS…KETGRKMTEE (131 aa). Composition is skewed to basic and acidic residues over residues 624 to 636, 645 to 690, and 700 to 733; these read TESKMMKEPHEEL, AAEE…HDEL, and VEEKETGSKMTEESHEELSNEMSLEEKETGRKMT. The stretch at 713 to 735 is one 5; truncated repeat; that stretch reads SHEELSNEMSLEEKETGRKMTEE. The tract at residues 738-759 is leucine-zipper; the sequence is LEAVMEMLCRTENKLLDVTQRL.

Belongs to the PHD-associated homeobox family.

It is found in the nucleus. Functionally, specifically binds to the fungal elicitor-responsive DNA element, 5'-CTAATTGTTTA-3', of the gene PR2 promoter. This Arabidopsis thaliana (Mouse-ear cress) protein is Pathogenesis-related homeodomain protein (PRH).